Here is a 473-residue protein sequence, read N- to C-terminus: Bifunctional protein HldE (473 aa).

The interval 1-318 (MKLSMPRFDQ…RAIQREEGSE (318 aa)) is ribokinase. 194–197 (NLSE) lines the ATP pocket. Asp-263 is an active-site residue. The cytidylyltransferase stretch occupies residues 343-473 (FTNGCFDILH…TAIVEKIRKN (131 aa)).

It in the N-terminal section; belongs to the carbohydrate kinase PfkB family. This sequence in the C-terminal section; belongs to the cytidylyltransferase family. Homodimer.

The enzyme catalyses D-glycero-beta-D-manno-heptose 7-phosphate + ATP = D-glycero-beta-D-manno-heptose 1,7-bisphosphate + ADP + H(+). It carries out the reaction D-glycero-beta-D-manno-heptose 1-phosphate + ATP + H(+) = ADP-D-glycero-beta-D-manno-heptose + diphosphate. It functions in the pathway nucleotide-sugar biosynthesis; ADP-L-glycero-beta-D-manno-heptose biosynthesis; ADP-L-glycero-beta-D-manno-heptose from D-glycero-beta-D-manno-heptose 7-phosphate: step 1/4. Its pathway is nucleotide-sugar biosynthesis; ADP-L-glycero-beta-D-manno-heptose biosynthesis; ADP-L-glycero-beta-D-manno-heptose from D-glycero-beta-D-manno-heptose 7-phosphate: step 3/4. Functionally, catalyzes the phosphorylation of D-glycero-D-manno-heptose 7-phosphate at the C-1 position to selectively form D-glycero-beta-D-manno-heptose-1,7-bisphosphate. Catalyzes the ADP transfer from ATP to D-glycero-beta-D-manno-heptose 1-phosphate, yielding ADP-D-glycero-beta-D-manno-heptose. The polypeptide is Bifunctional protein HldE (Pseudomonas putida (strain GB-1)).